A 148-amino-acid chain; its full sequence is [Ribosomal protein bS18]-alanine N-acetyltransferase (148 aa).

Residues 2–147 form the N-acetyltransferase domain; the sequence is NTISILSTTD…DAIIMALPIS (146 aa). Acetyl-CoA-binding positions include 69-71 and 77-82; these read IAV and RRGLGR. Catalysis depends on Glu103, which acts as the Proton acceptor. Asn108 contacts acetyl-CoA. The Proton donor role is filled by Tyr115.

The protein belongs to the acetyltransferase family. RimI subfamily.

Its subcellular location is the cytoplasm. The enzyme catalyses N-terminal L-alanyl-[ribosomal protein bS18] + acetyl-CoA = N-terminal N(alpha)-acetyl-L-alanyl-[ribosomal protein bS18] + CoA + H(+). Functionally, acetylates the N-terminal alanine of ribosomal protein bS18. This Salmonella typhimurium (strain LT2 / SGSC1412 / ATCC 700720) protein is [Ribosomal protein bS18]-alanine N-acetyltransferase.